The primary structure comprises 424 residues: UDP-N-acetylglucosamine 1-carboxyvinyltransferase (424 aa).

Position 22–23 (22–23 (KN)) interacts with phosphoenolpyruvate. R93 serves as a coordination point for UDP-N-acetyl-alpha-D-glucosamine. C117 functions as the Proton donor in the catalytic mechanism. The residue at position 117 (C117) is a 2-(S-cysteinyl)pyruvic acid O-phosphothioketal. UDP-N-acetyl-alpha-D-glucosamine-binding positions include 162–165 (KVSV), D307, and I329.

Belongs to the EPSP synthase family. MurA subfamily.

The protein localises to the cytoplasm. The catalysed reaction is phosphoenolpyruvate + UDP-N-acetyl-alpha-D-glucosamine = UDP-N-acetyl-3-O-(1-carboxyvinyl)-alpha-D-glucosamine + phosphate. The protein operates within cell wall biogenesis; peptidoglycan biosynthesis. Functionally, cell wall formation. Adds enolpyruvyl to UDP-N-acetylglucosamine. The protein is UDP-N-acetylglucosamine 1-carboxyvinyltransferase of Actinobacillus pleuropneumoniae serotype 3 (strain JL03).